Consider the following 876-residue polypeptide: MEVLREKVEEEEEAEREEAAERAERTEKLERVTKSAEVSREGTILSQDELRDLEGKLMAIEIPTQADHSVISQAPVDVTKLPPSYTTNSLKEEHLLLVADNFSRQYSHLCPDRVPLFLHPLNECNVPKFVSTTLRPTLMPYPELYNWDSCAQFVSDFLTMVPLVDPLKPPTHLYSSTTVLKCQKGNCFDFSTLLCSMLIGSGYDAYCVNGYGSLDLCLMDLTREVCPLTVKAKEIVKKKEKTVPKKYSIKPPRDLTSKFEQEQEEKRIQEIKDLEQRRLKEEEDRILEAEKAKPDPLHGLRVHSWVLVLAGKREVPESFFIDPLTARSYSTKDEHFLGIESLWNHKNYWINMQDCWNCCKDLIFDLGDPVRWEYMLLGTDKPHLSLTEEDEEGLDDDDDDVEDLGKEEEDKSFDMPSSWVSQIEITPEEFETRCPSGKKVIQYKKAQLEKWSPYLNNNGLVCRLTTYEDQQCTKVLEIKEWYQNREDMLELKHINKTTGLHVDYFKPGHPQALCVHSYKSMLPEMDRVMEFYKKIRVDGLVKREETPMTMTEYYEGRSDFLAYRHVNFGPRVKKLSQSSVESNPRPMVKITERFSRNPEKPADEDVAERLFLIVEERIQLRYHCRDDYITASKREFLRRMEVDSKGNKIIMTPEMCISYEVEPMEHTKKLLYQYETMNQLKNEEKLSRHQAWESELEVLEILKLREEEEEAHTLTISIYDTKRNEKSKEYREAMERVLHEEHLRQVEAQLDYLAPFLAQLPPGEKLTRWQAVRLKDECLSDFKQRLIDKANLIQARFEKETQELQKKQQWYQENQVTLTPEDENLYLSYCSQAMFRIRILEQRLNRHKELAPLKYLALEEKLYKDPRLIDFVKVFV.

Coiled coils occupy residues 1–33 and 258–295; these read MEVLREKVEEEEEAEREEAAERAERTEKLERVT and KFEQEQEEKRIQEIKDLEQRRLKEEEDRILEAEKAKPD. Residues 1 to 40 form a disordered region; it reads MEVLREKVEEEEEAEREEAAERAERTEKLERVTKSAEVSR. Over residues 17-40 the composition is skewed to basic and acidic residues; the sequence is EEAAERAERTEKLERVTKSAEVSR. Positions 385–412 are disordered; the sequence is SLTEEDEEGLDDDDDDVEDLGKEEEDKS. A compositionally biased stretch (acidic residues) spans 387-407; that stretch reads TEEDEEGLDDDDDDVEDLGKE. Coiled coils occupy residues 679–710 and 784–809; these read QLKNEEKLSRHQAWESELEVLEILKLREEEEE and QRLIDKANLIQARFEKETQELQKKQQ.

This sequence belongs to the DRC7 family. As to quaternary structure, component of the nexin-dynein regulatory complex (N-DRC). Interacts with TCTE1/DRC5. Interacts with DRC3 and GAS8/DRC4. In terms of tissue distribution, expressed in diplotene and pachytene spermytocytes, and in round and elongating spermatids (at protein level). Strongly expressed in spleen and testis, faintly expressed in kidney, ovary and thymus. Abundantly expressed in the testis and is weakly expressed in the brain, thymus, lung and ovary. Expressed in ciliated cells.

The protein localises to the cell projection. It is found in the cilium. The protein resides in the flagellum. Its subcellular location is the cytoplasm. It localises to the cytoskeleton. The protein localises to the cilium axoneme. It is found in the flagellum axoneme. Component of the nexin-dynein regulatory complex (N-DRC) a key regulator of ciliary/flagellar motility which maintains the alignment and integrity of the distal axoneme and regulates microtubule sliding in motile axonemes. Essential for male fertility, sperm head morphogenesis and sperm flagellum formation. Not required for ciliogenesis in the brain and trachea. The chain is Dynein regulatory complex subunit 7 (Drc7) from Mus musculus (Mouse).